Reading from the N-terminus, the 942-residue chain is Isoleucine--tRNA ligase (942 aa).

Positions 58–68 (PYANGDIHIGH) match the 'HIGH' region motif. Position 566 (Glu566) interacts with L-isoleucyl-5'-AMP. Positions 607 to 611 (KMSKS) match the 'KMSKS' region motif. Lys610 lines the ATP pocket. Cys905, Cys908, Cys925, and Cys928 together coordinate Zn(2+).

Belongs to the class-I aminoacyl-tRNA synthetase family. IleS type 1 subfamily. Monomer. Requires Zn(2+) as cofactor.

It localises to the cytoplasm. It carries out the reaction tRNA(Ile) + L-isoleucine + ATP = L-isoleucyl-tRNA(Ile) + AMP + diphosphate. In terms of biological role, catalyzes the attachment of isoleucine to tRNA(Ile). As IleRS can inadvertently accommodate and process structurally similar amino acids such as valine, to avoid such errors it has two additional distinct tRNA(Ile)-dependent editing activities. One activity is designated as 'pretransfer' editing and involves the hydrolysis of activated Val-AMP. The other activity is designated 'posttransfer' editing and involves deacylation of mischarged Val-tRNA(Ile). The sequence is that of Isoleucine--tRNA ligase from Pseudoalteromonas atlantica (strain T6c / ATCC BAA-1087).